Here is a 438-residue protein sequence, read N- to C-terminus: Adenylosuccinate synthetase (438 aa).

GTP is bound by residues Gly13 to Lys19 and Gly41 to Thr43. Asp14 (proton acceptor) is an active-site residue. Mg(2+)-binding residues include Asp14 and Gly41. IMP-binding positions include Asp14–Lys17, Asn39–His42, Thr130, Arg144, Gln225, Thr240, and Arg310. His42 (proton donor) is an active-site residue. Ala306–Arg312 lines the substrate pocket. GTP-binding positions include Arg312, Lys338–Asp340, and Ser421–Gly423.

It belongs to the adenylosuccinate synthetase family. As to quaternary structure, homodimer. It depends on Mg(2+) as a cofactor.

It localises to the cytoplasm. The catalysed reaction is IMP + L-aspartate + GTP = N(6)-(1,2-dicarboxyethyl)-AMP + GDP + phosphate + 2 H(+). It functions in the pathway purine metabolism; AMP biosynthesis via de novo pathway; AMP from IMP: step 1/2. Functionally, plays an important role in the de novo pathway of purine nucleotide biosynthesis. Catalyzes the first committed step in the biosynthesis of AMP from IMP. The sequence is that of Adenylosuccinate synthetase from Aliivibrio fischeri (strain ATCC 700601 / ES114) (Vibrio fischeri).